The chain runs to 570 residues: Polypeptide N-acetylgalactosaminyltransferase 2 (570 aa).

Topologically, residues 1–6 (MRRRSR) are cytoplasmic. The chain crosses the membrane as a helical; Signal-anchor for type II membrane protein span at residues 7-24 (MLLCFALLWVLGIAYYMY). The Lumenal portion of the chain corresponds to 25-570 (SGGGSALAAG…QWKFSLNLQQ (546 aa)). Serine 29 carries O-linked (Xyl...) (chondroitin sulfate) serine glycosylation. Intrachain disulfides connect cysteine 125–cysteine 353, cysteine 344–cysteine 422, cysteine 455–cysteine 472, and cysteine 495–cysteine 512. Residues 134-239 (LPATSVVITF…ERWLEPLLER (106 aa)) are catalytic subdomain A. Substrate contacts are provided by threonine 142, aspartate 175, and arginine 200. Aspartate 223 is a Mn(2+) binding site. Serine 224 serves as a coordination point for substrate. Histidine 225 serves as a coordination point for Mn(2+). The tract at residues 299 to 361 (PIKTPMIAGG…PCSRVGHVFR (63 aa)) is catalytic subdomain B. Position 330 (tryptophan 330) interacts with substrate. Residue histidine 358 coordinates Mn(2+). Residues arginine 361, histidine 364, and tyrosine 366 each contribute to the substrate site. One can recognise a Ricin B-type lectin domain in the interval 442-565 (QDIAFGALQQ…PALSQQWKFS (124 aa)). Asparagine 515 carries an N-linked (GlcNAc...) asparagine glycan. Serine 535 is modified (phosphoserine). Residues cysteine 538 and cysteine 554 are joined by a disulfide bond.

This sequence belongs to the glycosyltransferase 2 family. GalNAc-T subfamily. Requires Mn(2+) as cofactor. In terms of tissue distribution, widely expressed at high level.

Its subcellular location is the golgi apparatus. It localises to the golgi stack membrane. The protein resides in the secreted. It carries out the reaction L-seryl-[protein] + UDP-N-acetyl-alpha-D-galactosamine = a 3-O-[N-acetyl-alpha-D-galactosaminyl]-L-seryl-[protein] + UDP + H(+). The catalysed reaction is L-threonyl-[protein] + UDP-N-acetyl-alpha-D-galactosamine = a 3-O-[N-acetyl-alpha-D-galactosaminyl]-L-threonyl-[protein] + UDP + H(+). It participates in protein modification; protein glycosylation. In terms of biological role, catalyzes the initial reaction in O-linked oligosaccharide biosynthesis, the transfer of an N-acetyl-D-galactosamine residue to a serine or threonine residue on the protein receptor. Has a broad spectrum of substrates for peptides such as EA2, Muc5AC, Muc1a, Muc1b. Probably involved in O-linked glycosylation of the immunoglobulin A1 (IgA1) hinge region. Involved in O-linked glycosylation of APOC-III, ANGPTL3 and PLTP. It participates in the regulation of HDL-C metabolism. The chain is Polypeptide N-acetylgalactosaminyltransferase 2 (Galnt2) from Mus musculus (Mouse).